Reading from the N-terminus, the 215-residue chain is N-(5'-phosphoribosyl)anthranilate isomerase (215 aa).

The protein belongs to the TrpF family.

The catalysed reaction is N-(5-phospho-beta-D-ribosyl)anthranilate = 1-(2-carboxyphenylamino)-1-deoxy-D-ribulose 5-phosphate. Its pathway is amino-acid biosynthesis; L-tryptophan biosynthesis; L-tryptophan from chorismate: step 3/5. The sequence is that of N-(5'-phosphoribosyl)anthranilate isomerase from Pelodictyon phaeoclathratiforme (strain DSM 5477 / BU-1).